Here is a 495-residue protein sequence, read N- to C-terminus: Autoinducer 2 import ATP-binding protein LsrA (495 aa).

2 ABC transporter domains span residues 5-233 (IEAH…TPVS) and 256-494 (AQDF…FGGQ). ATP is bound at residue 37-44 (GGNGAGKS).

This sequence belongs to the ABC transporter superfamily. AI-2 autoinducer porter (TC 3.A.1.2.8) family. The complex is composed of two ATP-binding proteins (LsrA), two transmembrane proteins (LsrC and LsrD) and a solute-binding protein (LsrB).

Its subcellular location is the cell inner membrane. The catalysed reaction is ATP + H2O + (2R,4S)-2-methyl-2,3,3,4-tetrahydroxytetrahydrofuran-[AI-2-binding protein]Side 1 = ADP + phosphate + (2R,4S)-2-methyl-2,3,3,4-tetrahydroxytetrahydrofuranSide 2 + [AI-2-binding protein]Side 1.. Functionally, part of the ABC transporter complex LsrABCD involved in autoinducer 2 (AI-2) import. Responsible for energy coupling to the transport system. The polypeptide is Autoinducer 2 import ATP-binding protein LsrA (lsrA) (Enterobacter sp. (strain 638)).